Consider the following 165-residue polypeptide: Cysteine-rich hydrophobic domain-containing protein 2 (165 aa).

Residues 1–26 (MADFDEIYEEEEDEERALEEQLLKYS) are a coiled coil. The CHIC motif (Cys-rich) signature appears at 88–106 (CGCLCCCCTLGCSMWPVIC).

This sequence belongs to the CHIC family. In terms of processing, palmitoylation in the CHIC motif is required for membrane association.

The protein localises to the cell membrane. Its subcellular location is the cytoplasmic vesicle. In Homo sapiens (Human), this protein is Cysteine-rich hydrophobic domain-containing protein 2 (CHIC2).